A 382-amino-acid polypeptide reads, in one-letter code: MKALHFGAGNIGRGFIGKLLADSGMQVIFADVNDSVIDLLKSRRSYGVKIVGDSINTVERVTQVTGVNSKDETAIITLFNEVDLVTTAVGPNVLKIVASTFAKALEARIAGGNTKPLNIIACENMVRGTSFLKEQVFTHLNPDYKDKVEQLIGFVDSAVDRIVPPVKPDAEDPLLVTVEEFSEWIVDQTQFKGAIPDIKGMELTDNLMAFVERKLFTLNTGHAVTSYYGKFKGYKFVKESIEDESVKAFVKSVMQESGAVLIKRYGFDPQAHAAYIEKILKRFANPYLVDDVDRVGREPLRKLSYNDRLIKPLRGTIEYGLPNDNLIRAIATALSYRNENDPQALELAKSLAEAGVTQTIKKYTELQDENVIARIAKAYETL.

3–14 (ALHFGAGNIGRG) lines the NAD(+) pocket.

The protein belongs to the mannitol dehydrogenase family.

It catalyses the reaction D-mannitol 1-phosphate + NAD(+) = beta-D-fructose 6-phosphate + NADH + H(+). This Mannheimia succiniciproducens (strain KCTC 0769BP / MBEL55E) protein is Mannitol-1-phosphate 5-dehydrogenase.